The chain runs to 163 residues: Thiol peroxidase (163 aa).

The Thioredoxin domain occupies 16–162 (LQVGDKALDF…FEAAIAAAKA (147 aa)). The Cysteine sulfenic acid (-SOH) intermediate role is filled by cysteine 58. A disulfide bridge links cysteine 58 with cysteine 92.

It belongs to the peroxiredoxin family. Tpx subfamily. Homodimer.

The catalysed reaction is a hydroperoxide + [thioredoxin]-dithiol = an alcohol + [thioredoxin]-disulfide + H2O. Thiol-specific peroxidase that catalyzes the reduction of hydrogen peroxide and organic hydroperoxides to water and alcohols, respectively. Plays a role in cell protection against oxidative stress by detoxifying peroxides. The polypeptide is Thiol peroxidase (Streptococcus pneumoniae serotype 2 (strain D39 / NCTC 7466)).